The following is a 317-amino-acid chain: Inositol oxygenase 4 (317 aa).

Substrate-binding positions include arginine 58 and 115–117 (DES). The Fe cation site is built by histidine 128, histidine 153, and aspartate 154. Residues lysine 157 and 174–175 (GD) each bind substrate. The Fe cation site is built by histidine 226, histidine 252, and aspartate 285. Residue 252-253 (HS) coordinates substrate.

This sequence belongs to the myo-inositol oxygenase family. It depends on Fe cation as a cofactor. In terms of tissue distribution, expressed in flowers, leaves, siliques, and to a lesser extent in roots.

The protein localises to the cytoplasm. The catalysed reaction is myo-inositol + O2 = D-glucuronate + H2O + H(+). The protein operates within polyol metabolism; myo-inositol degradation into D-glucuronate; D-glucuronate from myo-inositol: step 1/1. Functionally, catalyzes the oxygenative cleavage of myo-inositol to D-glucuronate. Involved in the biosynthesis of UDP-glucuronic acid (UDP-GlcA), providing nucleotide sugars for cell-wall polymers. May be also involved in plant ascorbate biosynthesis. The polypeptide is Inositol oxygenase 4 (MIOX4) (Arabidopsis thaliana (Mouse-ear cress)).